The chain runs to 745 residues: VCP-like ATPase (745 aa).

ATP-binding positions include 231–238 (GPPGTGKT) and 508–515 (GPPGVGKT).

The protein belongs to the AAA ATPase family. CDC48 subfamily. As to quaternary structure, homohexamer. Forms a ring-shaped particle.

The protein is VCP-like ATPase (vat) of Thermoplasma acidophilum (strain ATCC 25905 / DSM 1728 / JCM 9062 / NBRC 15155 / AMRC-C165).